A 176-amino-acid polypeptide reads, in one-letter code: Ribosome maturation factor RimM (176 aa).

A PRC barrel domain is found at 100 to 173 (EGEFHLLDLV…WLRLTPPPGL (74 aa)).

The protein belongs to the RimM family. In terms of assembly, binds ribosomal protein uS19.

The protein localises to the cytoplasm. In terms of biological role, an accessory protein needed during the final step in the assembly of 30S ribosomal subunit, possibly for assembly of the head region. Essential for efficient processing of 16S rRNA. May be needed both before and after RbfA during the maturation of 16S rRNA. It has affinity for free ribosomal 30S subunits but not for 70S ribosomes. The polypeptide is Ribosome maturation factor RimM (Prochlorococcus marinus (strain MIT 9313)).